Consider the following 340-residue polypeptide: Selenide, water dikinase (340 aa).

The active site involves Cys-13. ATP contacts are provided by residues Lys-16 and 43–45 (ASD). A Mg(2+)-binding site is contributed by Asp-46. ATP contacts are provided by residues Asp-63, Asp-86, and 133-135 (GHS). Asp-86 contributes to the Mg(2+) binding site. Mg(2+) is bound at residue Asp-221.

This sequence belongs to the selenophosphate synthase 1 family. Class I subfamily. As to quaternary structure, homodimer. It depends on Mg(2+) as a cofactor.

It carries out the reaction hydrogenselenide + ATP + H2O = selenophosphate + AMP + phosphate + 2 H(+). Functionally, synthesizes selenophosphate from selenide and ATP. The protein is Selenide, water dikinase of Desulfitobacterium hafniense (strain Y51).